Reading from the N-terminus, the 154-residue chain is MHCPFCRHPDSRVVDSRETDEGQAIRRRRSCPECGRRFTTVETAVLAVVKRSGVTEPFSREKVIKGVRRACQGRQVDDDALNLLAQQVEDAVRATGSPEVPSHEVGLAILGPLRDLDEVAYLRFASVYRSFESAADFEREIEALRAHQDVTRSG.

A zinc finger spans residues 3 to 34; sequence CPFCRHPDSRVVDSRETDEGQAIRRRRSCPEC. The region spanning 46–136 is the ATP-cone domain; that stretch reads LAVVKRSGVT…VYRSFESAAD (91 aa).

The protein belongs to the NrdR family. It depends on Zn(2+) as a cofactor.

In terms of biological role, negatively regulates transcription of bacterial ribonucleotide reductase nrd genes and operons by binding to NrdR-boxes. This chain is Transcriptional repressor NrdR, found in Mycobacterium sp. (strain JLS).